The chain runs to 120 residues: MHQSSLGVLVLFSLIYLCISVHVPFDLNGWKALRLDNNRVQDSTNLAVEHLAGQLKQPITAFKLEENIPNWDLYRVSFIGTYFKGEEYECHSDVVWIFNPFNVTVFNTGCLPTSQLNFKY.

A signal peptide spans 1 to 20 (MHQSSLGVLVLFSLIYLCIS).

Component of the acid-insoluble organic matrix of the calcified shell.

Its subcellular location is the secreted. The protein is Insoluble matrix shell protein 2 of Ruditapes philippinarum (Japanese carpet shell).